Reading from the N-terminus, the 743-residue chain is DNA ligase 2 (743 aa).

NAD(+) contacts are provided by residues 45–49 (DADFD), 94–95 (SL), and E125. K127 (N6-AMP-lysine intermediate) is an active-site residue. The NAD(+) site is built by R148, E185, K301, and K325. Zn(2+) is bound by residues C419, C422, C438, and C444. One can recognise a BRCT domain in the interval 639–728 (EGPRPLEGLT…PERAKEAALP (90 aa)). The disordered stretch occupies residues 720–743 (ERAKEAALPVPEAAPAADPENSGE). A compositionally biased stretch (low complexity) spans 725–743 (AALPVPEAAPAADPENSGE).

Belongs to the NAD-dependent DNA ligase family. LigA subfamily. The cofactor is Mg(2+). Requires Mn(2+) as cofactor.

It catalyses the reaction NAD(+) + (deoxyribonucleotide)n-3'-hydroxyl + 5'-phospho-(deoxyribonucleotide)m = (deoxyribonucleotide)n+m + AMP + beta-nicotinamide D-nucleotide.. DNA ligase that catalyzes the formation of phosphodiester linkages between 5'-phosphoryl and 3'-hydroxyl groups in double-stranded DNA using NAD as a coenzyme and as the energy source for the reaction. It is essential for DNA replication and repair of damaged DNA. The chain is DNA ligase 2 from Streptomyces griseus subsp. griseus (strain JCM 4626 / CBS 651.72 / NBRC 13350 / KCC S-0626 / ISP 5235).